The primary structure comprises 296 residues: Formamidopyrimidine-DNA glycosylase (296 aa).

Pro2 (schiff-base intermediate with DNA) is an active-site residue. Glu3 acts as the Proton donor in catalysis. Lys58 serves as the catalytic Proton donor; for beta-elimination activity. Positions 106, 125, and 168 each coordinate DNA. The FPG-type zinc finger occupies 259–295 (RVYDRVGHACPTKGCTGRIGRIVQGGRSTFFCETCQV). Arg285 (proton donor; for delta-elimination activity) is an active-site residue.

The protein belongs to the FPG family. In terms of assembly, monomer. The cofactor is Zn(2+).

It catalyses the reaction Hydrolysis of DNA containing ring-opened 7-methylguanine residues, releasing 2,6-diamino-4-hydroxy-5-(N-methyl)formamidopyrimidine.. It carries out the reaction 2'-deoxyribonucleotide-(2'-deoxyribose 5'-phosphate)-2'-deoxyribonucleotide-DNA = a 3'-end 2'-deoxyribonucleotide-(2,3-dehydro-2,3-deoxyribose 5'-phosphate)-DNA + a 5'-end 5'-phospho-2'-deoxyribonucleoside-DNA + H(+). Its function is as follows. Involved in base excision repair of DNA damaged by oxidation or by mutagenic agents. Acts as a DNA glycosylase that recognizes and removes damaged bases. Has a preference for oxidized purines, such as 7,8-dihydro-8-oxoguanine (8-oxoG). Has AP (apurinic/apyrimidinic) lyase activity and introduces nicks in the DNA strand. Cleaves the DNA backbone by beta-delta elimination to generate a single-strand break at the site of the removed base with both 3'- and 5'-phosphates. The polypeptide is Formamidopyrimidine-DNA glycosylase (Methylorubrum populi (strain ATCC BAA-705 / NCIMB 13946 / BJ001) (Methylobacterium populi)).